We begin with the raw amino-acid sequence, 217 residues long: Ribosome maturation factor RimM (217 aa).

Residues Glu115–Leu186 form the PRC barrel domain. The segment at Thr181–Glu217 is disordered.

Belongs to the RimM family. As to quaternary structure, binds ribosomal protein uS19.

Its subcellular location is the cytoplasm. Its function is as follows. An accessory protein needed during the final step in the assembly of 30S ribosomal subunit, possibly for assembly of the head region. Essential for efficient processing of 16S rRNA. May be needed both before and after RbfA during the maturation of 16S rRNA. It has affinity for free ribosomal 30S subunits but not for 70S ribosomes. The chain is Ribosome maturation factor RimM from Leifsonia xyli subsp. xyli (strain CTCB07).